Here is a 245-residue protein sequence, read N- to C-terminus: 1-(5-phosphoribosyl)-5-[(5-phosphoribosylamino)methylideneamino] imidazole-4-carboxamide isomerase (245 aa).

The active-site Proton acceptor is the aspartate 11. Aspartate 132 acts as the Proton donor in catalysis.

It belongs to the HisA/HisF family.

The protein resides in the cytoplasm. The enzyme catalyses 1-(5-phospho-beta-D-ribosyl)-5-[(5-phospho-beta-D-ribosylamino)methylideneamino]imidazole-4-carboxamide = 5-[(5-phospho-1-deoxy-D-ribulos-1-ylimino)methylamino]-1-(5-phospho-beta-D-ribosyl)imidazole-4-carboxamide. It functions in the pathway amino-acid biosynthesis; L-histidine biosynthesis; L-histidine from 5-phospho-alpha-D-ribose 1-diphosphate: step 4/9. In Bacillus velezensis (strain DSM 23117 / BGSC 10A6 / LMG 26770 / FZB42) (Bacillus amyloliquefaciens subsp. plantarum), this protein is 1-(5-phosphoribosyl)-5-[(5-phosphoribosylamino)methylideneamino] imidazole-4-carboxamide isomerase.